The primary structure comprises 350 residues: Protein pelota homolog (350 aa).

The protein belongs to the eukaryotic release factor 1 family. Pelota subfamily. In terms of assembly, monomer. A divalent metal cation serves as cofactor.

It localises to the cytoplasm. In terms of biological role, may function in recognizing stalled ribosomes, interact with stem-loop structures in stalled mRNA molecules, and effect endonucleolytic cleavage of the mRNA. May play a role in the release non-functional ribosomes and degradation of damaged mRNAs. Has endoribonuclease activity. The protein is Protein pelota homolog of Methanosarcina acetivorans (strain ATCC 35395 / DSM 2834 / JCM 12185 / C2A).